The primary structure comprises 179 residues: Cellular nucleic acid-binding protein homolog (179 aa).

7 CCHC-type zinc fingers span residues 17–34 (PRCY…ECTK), 36–53 (SICY…ECTE), 58–75 (KTCY…DCPS), 83–100 (AECY…DCRT), 116–133 (MNCY…DCTM), 135–152 (VKCY…ECQQ), and 157–174 (QLCY…NCTS).

The protein to human CNBP and to retroviral nucleic acid binding proteins (NBP). Phosphorylated.

It is found in the nucleus. Its function is as follows. Acts in the sexual differentiation pathway. Is required for efficient conjugation. Double-stranded DNA-binding protein. The polypeptide is Cellular nucleic acid-binding protein homolog (byr3) (Schizosaccharomyces pombe (strain 972 / ATCC 24843) (Fission yeast)).